The sequence spans 384 residues: Brix domain-containing protein F44G4.1 (384 aa).

2 disordered regions span residues 1 to 58 and 82 to 135; these read MAPK…KVVK and SKAT…PQKE. Residues 18 to 48 are compositionally biased toward acidic residues; it reads FVEEEVTGDVDEDGFEQAEDMPDEVDSDEDE. Over residues 96–114 the composition is skewed to basic residues; the sequence is LPKSQRGKALKRALRKDKR. The span at 115 to 127 shows a compositional bias: basic and acidic residues; sequence ARQGERAQIRDEL. Residues 177–360 enclose the Brix domain; it reads PKVMITMTPK…LKWLQKGTFD (184 aa).

The protein is Brix domain-containing protein F44G4.1 of Caenorhabditis elegans.